A 544-amino-acid chain; its full sequence is Pentatricopeptide repeat-containing protein At1g66345, mitochondrial (544 aa).

The transit peptide at 1–116 (MASALRRLVE…RNLRHGIKSY (116 aa)) directs the protein to the mitochondrion. PPR repeat units lie at residues 163–197 (TPLVFDLLVQCYAKIRYLELGFDVFKRLCDCGFTL), 198–232 (SVITLNTLIHYSSKSKIDDLVWRIYECAIDKRIYP), 233–267 (NEITIRIMIQVLCKEGRLKEVVDLLDRICGKRCLP), 268–302 (SVIVNTSLVFRVLEEMRIEESMSLLKRLLMKNMVV), 303–337 (DTIGYSIVVYAKAKEGDLVSARKVFDEMLQRGFSA), 338–372 (NSFVYTVFVRVCCEKGDVKEAERLLSEMEESGVSP), 373–407 (YDETFNCLIGGFARFGWEEKGLEYCEVMVTRGLMP), 408–442 (SCSAFNEMVKSVSKIENVNRANEILTKSIDKGFVP), 443–477 (DEHTYSHLIRGFIEGNDIDQALKLFYEMEYRKMSP), 478–512 (GFEVFRSLIVGLCTCGKVEAGEKYLKIMKKRLIEP), and 513–544 (NADIYDALIKAFQKIGDKTNADRVYNEMISVR).

It belongs to the PPR family. P subfamily.

The protein localises to the mitochondrion. This chain is Pentatricopeptide repeat-containing protein At1g66345, mitochondrial, found in Arabidopsis thaliana (Mouse-ear cress).